The sequence spans 569 residues: Proline--tRNA ligase (569 aa).

The protein belongs to the class-II aminoacyl-tRNA synthetase family. ProS type 1 subfamily. As to quaternary structure, homodimer.

The protein localises to the cytoplasm. It carries out the reaction tRNA(Pro) + L-proline + ATP = L-prolyl-tRNA(Pro) + AMP + diphosphate. Catalyzes the attachment of proline to tRNA(Pro) in a two-step reaction: proline is first activated by ATP to form Pro-AMP and then transferred to the acceptor end of tRNA(Pro). As ProRS can inadvertently accommodate and process non-cognate amino acids such as alanine and cysteine, to avoid such errors it has two additional distinct editing activities against alanine. One activity is designated as 'pretransfer' editing and involves the tRNA(Pro)-independent hydrolysis of activated Ala-AMP. The other activity is designated 'posttransfer' editing and involves deacylation of mischarged Ala-tRNA(Pro). The misacylated Cys-tRNA(Pro) is not edited by ProRS. This chain is Proline--tRNA ligase, found in Campylobacter jejuni subsp. jejuni serotype O:23/36 (strain 81-176).